We begin with the raw amino-acid sequence, 126 residues long: Glycine cleavage system H protein (126 aa).

Residues K22–E104 enclose the Lipoyl-binding domain. N6-lipoyllysine is present on K63.

Belongs to the GcvH family. In terms of assembly, the glycine cleavage system is composed of four proteins: P, T, L and H. The cofactor is (R)-lipoate.

Its function is as follows. The glycine cleavage system catalyzes the degradation of glycine. The H protein shuttles the methylamine group of glycine from the P protein to the T protein. Is also involved in protein lipoylation via its role as an octanoyl/lipoyl carrier protein intermediate. The protein is Glycine cleavage system H protein of Oceanobacillus iheyensis (strain DSM 14371 / CIP 107618 / JCM 11309 / KCTC 3954 / HTE831).